The primary structure comprises 856 residues: TPR repeat-containing protein TP_0123 (856 aa).

3 TPR repeats span residues 107–140 (YAAV…VADD), 523–556 (YRTF…AEQL), and 603–636 (TVSL…ALQY).

This chain is TPR repeat-containing protein TP_0123, found in Treponema pallidum (strain Nichols).